The following is a 403-amino-acid chain: cAMP-dependent protein kinase regulatory subunit (403 aa).

The interval 1 to 155 (MADYTIPSEL…RIQASIGNNF (155 aa)) is dimerization and phosphorylation. Residues 79–125 (YAYSTDDGFGTEDDDDDDDDEDDEAAIPPPVVNRGRRTSVSAESMAP) form a disordered region. The segment covering 87 to 103 (FGTEDDDDDDDDEDDEA) has biased composition (acidic residues). Serine 117 carries the phosphoserine modification. Residues 156-278 (LFRN…EEVP), glutamate 226, arginine 235, 279-403 (LLSS…PGEH), glutamate 349, and arginine 358 each bind 3',5'-cyclic AMP.

The protein belongs to the cAMP-dependent kinase regulatory chain family. As to quaternary structure, tetramer, composed of 2 regulatory (R) and 2 catalytic (C) subunits. In the presence of cAMP it dissociates into 2 active monomeric C subunits and an R dimer that binds four cAMP molecules.

This chain is cAMP-dependent protein kinase regulatory subunit (PKAR), found in Blastocladiella emersonii (Aquatic fungus).